The chain runs to 149 residues: Alpha-crystallin A chain (149 aa).

In terms of domain architecture, sHSP spans 28–138 (LLRGFMDSGI…SHSERPIPVS (111 aa)). Zn(2+) is bound by residues His55, His76, Glu78, His83, His91, and His130. The tract at residues 125–149 (NLVSSHSERPIPVSREEKPTSAPSS) is disordered. Residues 130 to 143 (HSERPIPVSREEKP) are compositionally biased toward basic and acidic residues. Ser138 is a glycosylation site (O-linked (GlcNAc) serine).

It belongs to the small heat shock protein (HSP20) family. As to quaternary structure, heteropolymer composed of three CRYAA and one CRYAB subunits. Inter-subunit bridging via zinc ions enhances stability, which is crucial as there is no protein turn over in the lens. Can also form homodimers and homotetramers (dimers of dimers) which serve as the building blocks of homooligomers. Within homooligomers, the zinc-binding motif is created from residues of 3 different molecules. His-76 and Glu-78 from one molecule are ligands of the zinc ion, and His-83 and His-130 residues from additional molecules complete the site with tetrahedral coordination geometry.

The protein resides in the cytoplasm. It localises to the nucleus. Functionally, contributes to the transparency and refractive index of the lens. May act as a chaperone, preventing aggregation of various proteins under a wide range of stress conditions. The chain is Alpha-crystallin A chain (CRYAA) from Rana temporaria (European common frog).